A 165-amino-acid chain; its full sequence is Anaphase-promoting complex subunit 11 (165 aa).

The segment at 52–95 adopts an RING-type; atypical zinc-finger fold; sequence CPSCKFPGDQCPLVIGLCHHNFHDHCIYRWLDTPTSKGLCPMCR.

As to quaternary structure, the APC/C is composed of at least 13 subunits that stay tightly associated throughout the cell cycle: APC1, APC2, APC4, APC5, APC9, APC11, CDC16, CDC23, CDC26, CDC27, DOC1, MND2 and SWM1.

It functions in the pathway protein modification; protein ubiquitination. Probably catalytic subunit of the anaphase promoting complex/cyclosome (APC/C), a cell cycle-regulated E3 ubiquitin-protein ligase complex that controls progression through mitosis and the G1 phase of the cell cycle. The APC/C is thought to confer substrate specificity and, in the presence of ubiquitin-conjugating E2 enzymes, it catalyzes the formation of protein-ubiquitin conjugates that are subsequently degraded by the 26S proteasome. In early mitosis, the APC/C is activated by CDC20 and targets securin PDS1, the B-type cyclin CLB5, and other anaphase inhibitory proteins for proteolysis, thereby triggering the separation of sister chromatids at the metaphase-to-anaphase transition. In late mitosis and in G1, degradation of CLB5 allows activation of the APC/C by CDH1, which is needed to destroy CDC20 and the B-type cyclin CLB2 to allow exit from mitosis and creating the low CDK state necessary for cytokinesis and for reforming prereplicative complexes in G1 prior to another round of replication. APC11 is required to recruit the ubiquitin-conjugating enzyme E2 to the APC/C. This is Anaphase-promoting complex subunit 11 (APC11) from Saccharomyces cerevisiae (strain ATCC 204508 / S288c) (Baker's yeast).